A 410-amino-acid polypeptide reads, in one-letter code: E3 ubiquitin-protein ligase PRT1 (410 aa).

RING-type zinc fingers lie at residues 26–66 (CCVC…PICR) and 192–232 (CSAC…QECN). A ZZ-type zinc finger spans residues 306–370 (HFGAGCDSCG…RLELARSPQV (65 aa)). Positions 311, 314, 326, 329, 338, 341, 356, and 360 each coordinate Zn(2+). Residues 385-410 (ISNEGMDTDEGEEGPPGSSNESSSTE) form a disordered region. Over residues 399–410 (PPGSSNESSSTE) the composition is skewed to low complexity.

The protein resides in the cytoplasm. The catalysed reaction is S-ubiquitinyl-[E2 ubiquitin-conjugating enzyme]-L-cysteine + [acceptor protein]-L-lysine = [E2 ubiquitin-conjugating enzyme]-L-cysteine + N(6)-ubiquitinyl-[acceptor protein]-L-lysine.. The protein operates within protein modification; protein ubiquitination. Its function is as follows. E3 ubiquitin-protein ligase that mediates ubiquitination and subsequent proteasomal degradation of target proteins. Functions in the N-end rule pathway of protein degradation, where it specifically recognizes and ubiquitinates proteins with a N-terminal bulky aromatic amino acid (Phe). Does not act on aliphatic hydrophobic and basic N-terminal residues (Arg or Leu) containing proteins. The sequence is that of E3 ubiquitin-protein ligase PRT1 (PRT1) from Arabidopsis thaliana (Mouse-ear cress).